The chain runs to 500 residues: UPF0371 protein SZO_06760 (500 aa).

It belongs to the UPF0371 family.

The protein is UPF0371 protein SZO_06760 of Streptococcus equi subsp. zooepidemicus (strain H70).